The following is a 408-amino-acid chain: Succinylornithine transaminase (408 aa).

Position 252 is an N6-(pyridoxal phosphate)lysine (lysine 252).

Belongs to the class-III pyridoxal-phosphate-dependent aminotransferase family. AstC subfamily. The cofactor is pyridoxal 5'-phosphate.

It carries out the reaction N(2)-succinyl-L-ornithine + 2-oxoglutarate = N-succinyl-L-glutamate 5-semialdehyde + L-glutamate. Its pathway is amino-acid degradation; L-arginine degradation via AST pathway; L-glutamate and succinate from L-arginine: step 3/5. Catalyzes the transamination of N(2)-succinylornithine and alpha-ketoglutarate into N(2)-succinylglutamate semialdehyde and glutamate. Can also act as an acetylornithine aminotransferase. In Salmonella enteritidis PT4 (strain P125109), this protein is Succinylornithine transaminase.